Reading from the N-terminus, the 217-residue chain is Elongation factor Ts (217 aa).

The involved in Mg(2+) ion dislocation from EF-Tu stretch occupies residues 81-84 (TDFV).

Belongs to the EF-Ts family.

Its subcellular location is the cytoplasm. In terms of biological role, associates with the EF-Tu.GDP complex and induces the exchange of GDP to GTP. It remains bound to the aminoacyl-tRNA.EF-Tu.GTP complex up to the GTP hydrolysis stage on the ribosome. This Myxococcus xanthus (strain DK1622) protein is Elongation factor Ts.